Consider the following 310-residue polypeptide: MERWAAPKVTAGSARRYVADQPSFSSTLLDAIYKSMDEQPGHGGGATGVEAVAAAAKKQHEAALHYGYYYKPSLAGSYRARAPGPHATTSSSSECSSYGGFSSSEAESSHHRRLRPIRTTVPGGAPGPAPEKKAKKPGASIRAKLRDLRKPASPGARLAGFLNSIFAGKRAPATPPSATAGAESACSTASSYSRSCLSKTPSTRGQAKRTVRFLDSDTESLASSTVVDRRRVPVEAVQQMLLQRMEMESDEDDDESSDASSDLFELENFAAIAPAGAAYRDELPVYETTRVALNRAIGHGYGHGRSARVV.

The segment at 81-141 (RAPGPHATTS…KKAKKPGASI (61 aa)) is disordered. Positions 90 to 106 (SSSSECSSYGGFSSSEA) are enriched in low complexity.

The protein belongs to the BIG GRAIN 1 (BG1) plant protein family.

The protein resides in the cell membrane. In terms of biological role, involved in auxin transport. Positive regulator of the auxin signaling pathway involved in gravitropism, plant growth and grain development. This is Protein BIG GRAIN 1 from Oryza sativa subsp. indica (Rice).